We begin with the raw amino-acid sequence, 31 residues long: U13-ctenitoxin-Pn1b (31 aa).

3 disulfides stabilise this stretch: Cys3-Cys17, Cys10-Cys21, and Cys16-Cys30.

In terms of tissue distribution, expressed by the venom gland.

The protein resides in the secreted. In terms of biological role, acts as a neurotoxin. This chain is U13-ctenitoxin-Pn1b, found in Phoneutria nigriventer (Brazilian armed spider).